Consider the following 49-residue polypeptide: Soritesidine (49 aa).

The protein localises to the secreted. In terms of biological role, very potent toxin that exhibits a wide range of toxicities over various organisms and cells including brine shrimp larvae (Artemia salina), sea hare eggs (Aplysia kurodai), mice, and cultured mammalian cells. An SOR-containing fraction cleaves plasmid DNA in a bivalent metal ion dependent manner suggesting genotoxicity of SOR. The polypeptide is Soritesidine (Spongosorites sp. (strain QM G324170) (Okinawan marine Sponge)).